The following is a 299-amino-acid chain: Lathosterol oxidase (299 aa).

3 helical membrane passes run 32-52 (ISLL…CATL), 79-99 (FTVQ…LLEI), and 117-137 (FELV…IYWI). The region spanning 124 to 252 (ISFLFFTDMF…YFTLWDRIGG (129 aa)) is the Fatty acid hydroxylase domain. A Histidine box-1 motif is present at residues 138–143 (HRGLHH). The short motif at 151-155 (HKPHH) is the Histidine box-2 element. The chain crosses the membrane as a helical span at residues 186–206 (IFPLHKVVYLSLYILVNIWTI). Positions 228–233 (HHTDHH) match the Histidine box-3 motif. Phosphoserine is present on serine 253. The disordered stretch occupies residues 274-299 (EGKRSSHSGNGCKNEKLFNGEFTKTE). The span at 286–299 (KNEKLFNGEFTKTE) shows a compositional bias: basic and acidic residues.

The protein belongs to the sterol desaturase family. Requires Fe cation as cofactor.

It is found in the endoplasmic reticulum membrane. It catalyses the reaction a Delta(7)-sterol + 2 Fe(II)-[cytochrome b5] + O2 + 2 H(+) = a Delta(5),Delta(7)-sterol + 2 Fe(III)-[cytochrome b5] + 2 H2O. The catalysed reaction is lathosterol + 2 Fe(II)-[cytochrome b5] + O2 + 2 H(+) = 7-dehydrocholesterol + 2 Fe(III)-[cytochrome b5] + 2 H2O. It carries out the reaction 5alpha-cholesta-7,24-dien-3beta-ol + 2 Fe(II)-[cytochrome b5] + O2 + 2 H(+) = 7-dehydrodesmosterol + 2 Fe(III)-[cytochrome b5] + 2 H2O. Its pathway is steroid biosynthesis; cholesterol biosynthesis. Catalyzes the penultimate step of the biosynthesis of cholesterol, the dehydrogenation of lathosterol into 7-dehydrocholesterol (7-DHC). Cholesterol is the major sterol component in mammalian membranes and a precursor for bile acid and steroid hormone synthesis. In addition to its essential role in cholesterol biosynthesis, it also indirectly regulates ferroptosis through the production of 7-DHC. By diverting the spread of damage caused by peroxyl radicals from the phospholipid components to its sterol nucleus, 7-DHC prevents this form of cell death. This chain is Lathosterol oxidase, found in Homo sapiens (Human).